The following is a 446-amino-acid chain: MPLNDTTMDRRGLVVERDFSFRILTACFLSLLILSTLLGNTLVCAAVIRFRHLRSKVTNFFVISLAVSDLLVAVLVMPWKAVAEIAGFWPFGSFCNIWVAFDIMCSTASILNLCVISVDRYWAISSPFRYERKMTPKAAFILISVAWTLSVLISFIPVQLNWHKARPLSSPDGNVSSQDETMDNCDSSLSRTYAISSSLISFYIPVAIMIVTYTRIYRIAQKQIRRISALERAAVHAKNCQNTTGNGANVECSQPESSFKMSFKRETKVLKTLSVIMGVFVCCWLPFFILNCMVPFCESDLPSGETKPFCIDSITFDVFVWFGWANSSLNPIIYAFNADFRKAFSTLLGCYRLCPTANNAIETVSINNNGAVFSSHHEPRGSISKDCNLVYLIPQAVTSRDPKKEEGGGSKPLEKTSPALSVILDYEVDLSLEKINPITQNGQHKT.

The Extracellular portion of the chain corresponds to 1–22 (MPLNDTTMDRRGLVVERDFSFR). An N-linked (GlcNAc...) asparagine glycan is attached at N4. A helical membrane pass occupies residues 23 to 48 (ILTACFLSLLILSTLLGNTLVCAAVI). At 49-59 (RFRHLRSKVTN) the chain is on the cytoplasmic side. The helical transmembrane segment at 60–86 (FFVISLAVSDLLVAVLVMPWKAVAEIA) threads the bilayer. Residues 87–95 (GFWPFGSFC) lie on the Extracellular side of the membrane. C95 and C185 are oxidised to a cystine. Residues 96–118 (NIWVAFDIMCSTASILNLCVISV) traverse the membrane as a helical segment. Residues 119–137 (DRYWAISSPFRYERKMTPK) are Cytoplasmic-facing. The helical transmembrane segment at 138 to 162 (AAFILISVAWTLSVLISFIPVQLNW) threads the bilayer. The Extracellular segment spans residues 163-191 (HKARPLSSPDGNVSSQDETMDNCDSSLSR). A helical transmembrane segment spans residues 192–217 (TYAISSSLISFYIPVAIMIVTYTRIY). The Cytoplasmic segment spans residues 218 to 271 (RIAQKQIRRISALERAAVHAKNCQNTTGNGANVECSQPESSFKMSFKRETKVLK). The helical transmembrane segment at 272–298 (TLSVIMGVFVCCWLPFFILNCMVPFCE) threads the bilayer. The Extracellular segment spans residues 299–315 (SDLPSGETKPFCIDSIT). Residues 316 to 340 (FDVFVWFGWANSSLNPIIYAFNADF) form a helical membrane-spanning segment. The Cytoplasmic portion of the chain corresponds to 341–446 (RKAFSTLLGC…PITQNGQHKT (106 aa)). S-palmitoyl cysteine attachment occurs at residues C350 and C354.

It belongs to the G-protein coupled receptor 1 family. In terms of assembly, interacts with DNAJC14 via its C-terminus.

The protein resides in the cell membrane. It localises to the endoplasmic reticulum membrane. The protein localises to the cell projection. Its subcellular location is the cilium membrane. It is found in the dendrite. The protein resides in the dendritic spine. Functionally, this is one of the five types (D1 to D5) of receptors for dopamine. The activity of this receptor is mediated by G proteins which activate adenylyl cyclase. The protein is D(1A) dopamine receptor (DRD1) of Didelphis virginiana (North American opossum).